The following is a 72-amino-acid chain: Large ribosomal subunit protein bL31 (72 aa).

It belongs to the bacterial ribosomal protein bL31 family. Type A subfamily. In terms of assembly, part of the 50S ribosomal subunit.

In terms of biological role, binds the 23S rRNA. The polypeptide is Large ribosomal subunit protein bL31 (Deinococcus geothermalis (strain DSM 11300 / CIP 105573 / AG-3a)).